Reading from the N-terminus, the 23-residue chain is Dahlein-4.3 (23 aa).

In terms of tissue distribution, expressed by the skin dorsal glands.

It is found in the secreted. Its function is as follows. Has no antimicrobial activity. The polypeptide is Dahlein-4.3 (Ranoidea dahlii (Dahl's aquatic frog)).